Reading from the N-terminus, the 92-residue chain is MKLCVTVLSLLVLMAAFCSPALSAPMGSDPPTACCFSYTLRKIPRNFVNDYFETSSLCSQPAVVFQTKKGRQVCANPSEPWVQEYVDDLELN.

The signal sequence occupies residues 1–23 (MKLCVTVLSLLVLMAAFCSPALS). 2 disulfides stabilise this stretch: Cys-34–Cys-58 and Cys-35–Cys-74.

Belongs to the intercrine beta (chemokine CC) family. In terms of assembly, homodimer. Interacts with CCR5.

It is found in the secreted. In terms of biological role, monokine with inflammatory and chemokinetic properties. The chain is C-C motif chemokine 4 (CCL4) from Bos taurus (Bovine).